The primary structure comprises 188 residues: F-box only protein 36 (188 aa).

The 47-residue stretch at 91–137 folds into the F-box domain; that stretch reads FDYLERLSDRLLLKIICYLDLEDIASLSQTSSKFEKLCKSDLLWEQI.

In terms of assembly, directly interacts with SKP1 and CUL1.

Substrate-recognition component of the SCF (SKP1-CUL1-F-box protein)-type E3 ubiquitin ligase complex. The chain is F-box only protein 36 (Fbxo36) from Mus musculus (Mouse).